An 874-amino-acid polypeptide reads, in one-letter code: Leucine--tRNA ligase (874 aa).

The 'HIGH' region signature appears at 43-53 (PYPSGRIHIGH). The short motif at 630-634 (KMSKS) is the 'KMSKS' region element. Position 633 (K633) interacts with ATP.

The protein belongs to the class-I aminoacyl-tRNA synthetase family.

The protein localises to the cytoplasm. The catalysed reaction is tRNA(Leu) + L-leucine + ATP = L-leucyl-tRNA(Leu) + AMP + diphosphate. This chain is Leucine--tRNA ligase, found in Bradyrhizobium sp. (strain ORS 278).